The following is a 452-amino-acid chain: Protein CSN12 homolog (452 aa).

The 198-residue stretch at 249 to 446 folds into the PCI domain; it reads VTFKYYEGVL…GFVVLSKSGA (198 aa).

This sequence belongs to the CSN12 family.

This chain is Protein CSN12 homolog (csn-8), found in Neurospora crassa (strain ATCC 24698 / 74-OR23-1A / CBS 708.71 / DSM 1257 / FGSC 987).